Reading from the N-terminus, the 152-residue chain is SKP1-like protein 12 (152 aa).

The segment at 94–152 is interaction with the F-box domain of F-box proteins; the sequence is ILAANYLNIKSLFDLTCQTVADMIKGKTPEEIRSTFNIENDFTPEEEEAVRKENQWAFE.

Belongs to the SKP1 family. Part of a SCF (SKP1-cullin-F-box) protein ligase complex. Interacts with ADO3/FKF1, COI1/FBL2, EBF1/FBL6, PP2B10, At3g61590 and At5g49610. Expressed in young seedlings, roots, leaves, floral stems, inflorescences, and siliques, with a slightly higher level in inflorescence than in other tissues.

The protein resides in the nucleus. The protein operates within protein modification; protein ubiquitination. Functionally, involved in ubiquitination and subsequent proteasomal degradation of target proteins. Together with CUL1, RBX1 and a F-box protein, it forms a SCF E3 ubiquitin ligase complex. The functional specificity of this complex depends on the type of F-box protein. In the SCF complex, it serves as an adapter that links the F-box protein to CUL1. Plays a role during early flowers reproductive development. The chain is SKP1-like protein 12 (ASK12) from Arabidopsis thaliana (Mouse-ear cress).